The chain runs to 189 residues: Ribonuclease M5 2 (189 aa).

Positions 8-91 (SQVIVAEGRD…VFLKRDEAVP (84 aa)) constitute a Toprim domain. E14, D60, and D62 together coordinate Mg(2+).

This sequence belongs to the ribonuclease M5 family. Mg(2+) is required as a cofactor.

It is found in the cytoplasm. It catalyses the reaction Endonucleolytic cleavage of RNA, removing 21 and 42 nucleotides, respectively, from the 5'- and 3'-termini of a 5S-rRNA precursor.. Its function is as follows. Required for correct processing of both the 5' and 3' ends of 5S rRNA precursor. Cleaves both sides of a double-stranded region yielding mature 5S rRNA in one step. The protein is Ribonuclease M5 2 of Ligilactobacillus salivarius (strain UCC118) (Lactobacillus salivarius).